Here is a 343-residue protein sequence, read N- to C-terminus: MKKLTLAELATITGGELFGDESLVVGRVAPMDKAQEGDVTFLSNPKYAKHLSECKATVVMVKAEHKDQCAGNALVVADPYVAFARVVQAMDTTPKPAEDIAPSAVIASDVKMGENVAIGANAVIETGVELGDNVVIGAGCFIGKNAKLGNNTKLWANVTIYHEVSLGDDCLVQSGTVIGSDGFGYANDRGEWIKIPQLGSVRIGNRVEIGACTTIDRGALEDTIIEDNVILDNQLQIAHNVQIGYGTVMPGGTIVAGSTKIGKYCQIGGASVLNGHITIADGVAITGMGMVMRSIEEKGLYSSGIPLQTNREWRKTATRVHRIDEMNKRLKAVEKQLEQKEES.

The active-site Proton acceptor is His239.

It belongs to the transferase hexapeptide repeat family. LpxD subfamily. In terms of assembly, homotrimer.

The catalysed reaction is a UDP-3-O-[(3R)-3-hydroxyacyl]-alpha-D-glucosamine + a (3R)-hydroxyacyl-[ACP] = a UDP-2-N,3-O-bis[(3R)-3-hydroxyacyl]-alpha-D-glucosamine + holo-[ACP] + H(+). It participates in bacterial outer membrane biogenesis; LPS lipid A biosynthesis. In terms of biological role, catalyzes the N-acylation of UDP-3-O-acylglucosamine using 3-hydroxyacyl-ACP as the acyl donor. Is involved in the biosynthesis of lipid A, a phosphorylated glycolipid that anchors the lipopolysaccharide to the outer membrane of the cell. This Vibrio parahaemolyticus serotype O3:K6 (strain RIMD 2210633) protein is UDP-3-O-acylglucosamine N-acyltransferase.